The sequence spans 574 residues: Arginine--tRNA ligase (574 aa).

A 'HIGH' region motif is present at residues 121–131 (PNIAKEMHIGH).

The protein belongs to the class-I aminoacyl-tRNA synthetase family. As to quaternary structure, monomer.

It localises to the cytoplasm. It carries out the reaction tRNA(Arg) + L-arginine + ATP = L-arginyl-tRNA(Arg) + AMP + diphosphate. This is Arginine--tRNA ligase from Buchnera aphidicola subsp. Acyrthosiphon pisum (strain Tuc7).